The following is a 290-amino-acid chain: UPF0761 membrane protein YihY (290 aa).

6 consecutive transmembrane segments (helical) span residues 44–64, 104–124, 140–160, 183–203, 210–230, and 244–264; these read LLSL…FPMF, VGAC…DSAL, FAVY…SLAI, ILPL…VPTT, ALVG…GFAL, and VLAV…IVLL.

This sequence belongs to the UPF0761 family.

It is found in the cell inner membrane. The chain is UPF0761 membrane protein YihY from Salmonella paratyphi B (strain ATCC BAA-1250 / SPB7).